A 463-amino-acid chain; its full sequence is Glutamate--tRNA ligase (463 aa).

The 'HIGH' region motif lies at 10-20 (PSPTGHLHIGG). Residues 236–240 (KLSKR) carry the 'KMSKS' region motif. K239 serves as a coordination point for ATP.

It belongs to the class-I aminoacyl-tRNA synthetase family. Glutamate--tRNA ligase type 1 subfamily. In terms of assembly, monomer.

The protein resides in the cytoplasm. The enzyme catalyses tRNA(Glu) + L-glutamate + ATP = L-glutamyl-tRNA(Glu) + AMP + diphosphate. In terms of biological role, catalyzes the attachment of glutamate to tRNA(Glu) in a two-step reaction: glutamate is first activated by ATP to form Glu-AMP and then transferred to the acceptor end of tRNA(Glu). The polypeptide is Glutamate--tRNA ligase (Nitratidesulfovibrio vulgaris (strain DP4) (Desulfovibrio vulgaris)).